The following is a 394-amino-acid chain: Myb-related protein 2 (394 aa).

The HTH myb-type domain maps to 42-102 (TDAKPRLKWT…HLQKYRLSKN (61 aa)). Positions 73–98 (PKTIMKVMGIPGLTLYHLKSHLQKYR) form a DNA-binding region, H-T-H motif. Residues 148-168 (GEALQMQIEVQRRLHEQLEVQ) are coiled coil. An LHEQLE motif is present at residues 161–166 (LHEQLE). The interval 338 to 363 (LHGHKSQHQQGNNEDHKLETRNRKGM) is disordered. Basic and acidic residues predominate over residues 350–363 (NEDHKLETRNRKGM).

This sequence belongs to the MYB-CC family. Isoform 1: Homodimer. Isoform 3: Does not form homodimer. As to expression, expressed in phloem and/or cambium.

It localises to the nucleus. Functionally, transcriptional activator that may activate the transcription of specific genes involved in nitrogen uptake or assimilation. Acts redundantly with MYR1 as a repressor of flowering and organ elongation under decreased light intensity. Represses gibberellic acid (GA)-dependent responses and affects levels of bioactive GA. The polypeptide is Myb-related protein 2 (Arabidopsis thaliana (Mouse-ear cress)).